The following is an 83-amino-acid chain: MNIISNILIGLIKFYKMVISPYLTPSCRYLPTCSEYTIECLRTYGLVKAISKSTKRIFSCHPIKILGGGEGFDPVNKEFKAKK.

This sequence belongs to the UPF0161 family.

The protein localises to the cell inner membrane. Functionally, could be involved in insertion of integral membrane proteins into the membrane. The polypeptide is Putative membrane protein insertion efficiency factor (Pelagibacter ubique (strain HTCC1062)).